The following is a 367-amino-acid chain: Chorismate synthase (367 aa).

Residues 39-60 form a disordered region; sequence EEFSHDLQRRASGKSRHTSARR. 2 residues coordinate NADP(+): Arg-48 and Arg-54. Residues 125 to 127, 238 to 239, Gly-278, 293 to 297, and Arg-319 each bind FMN; these read RSS, NA, and KPTSS.

This sequence belongs to the chorismate synthase family. Homotetramer. FMNH2 is required as a cofactor.

It carries out the reaction 5-O-(1-carboxyvinyl)-3-phosphoshikimate = chorismate + phosphate. It participates in metabolic intermediate biosynthesis; chorismate biosynthesis; chorismate from D-erythrose 4-phosphate and phosphoenolpyruvate: step 7/7. Functionally, catalyzes the anti-1,4-elimination of the C-3 phosphate and the C-6 proR hydrogen from 5-enolpyruvylshikimate-3-phosphate (EPSP) to yield chorismate, which is the branch point compound that serves as the starting substrate for the three terminal pathways of aromatic amino acid biosynthesis. This reaction introduces a second double bond into the aromatic ring system. The protein is Chorismate synthase of Xanthomonas oryzae pv. oryzae (strain MAFF 311018).